The following is a 185-amino-acid chain: Celestoxin (185 aa).

The signal sequence occupies residues 1-20; the sequence is MKFIAAVLLVALLCPKDSTS. The propeptide occupies 21–148; it reads LASRLSGLLG…GLPVALPVSV (128 aa).

As to expression, expressed by the mandibular venom gland.

It is found in the secreted. In terms of biological role, has a hypotensive activity. The polypeptide is Celestoxin (Caribicus warreni (Haitian giant galliwasp)).